We begin with the raw amino-acid sequence, 425 residues long: Formyl-CoA:oxalate CoA-transferase (425 aa).

CoA-binding positions include 17-18 (QS), Arg38, 72-75 (LDTK), 96-98 (NFG), Arg104, and 136-139 (KVYE). Asp168 serves as the catalytic Nucleophile. A substrate-binding site is contributed by 247–249 (GGQ).

It belongs to the CoA-transferase III family. Frc subfamily. Homodimer.

The catalysed reaction is formyl-CoA + oxalate = oxalyl-CoA + formate. The protein operates within metabolic intermediate degradation; oxalate degradation; CO(2) and formate from oxalate: step 1/2. Functionally, involved in the catabolism of oxalate and in the adapatation to low pH via the induction of the oxalate-dependent acid tolerance response (ATR). Catalyzes the transfer of the CoA moiety from formyl-CoA to oxalate. The protein is Formyl-CoA:oxalate CoA-transferase of Rhodopseudomonas palustris (strain BisA53).